The following is a 524-amino-acid chain: uncharacterized protein (524 aa).

The helical transmembrane segment at E13–V33 threads the bilayer.

The protein localises to the membrane. This is an uncharacterized protein from Methanocaldococcus jannaschii (strain ATCC 43067 / DSM 2661 / JAL-1 / JCM 10045 / NBRC 100440) (Methanococcus jannaschii).